The primary structure comprises 455 residues: tRNA-2-methylthio-N(6)-dimethylallyladenosine synthase (455 aa).

The MTTase N-terminal domain maps to 3–117; that stretch reads KGLYIESYGC…LPELIMKATR (115 aa). [4Fe-4S] cluster-binding residues include Cys-12, Cys-48, Cys-80, Cys-155, Cys-159, and Cys-162. Residues 141 to 375 form the Radical SAM core domain; the sequence is VSRGVSAFVS…LLTQQRLFTK (235 aa).

It belongs to the methylthiotransferase family. MiaB subfamily. Monomer. Requires [4Fe-4S] cluster as cofactor.

It localises to the cytoplasm. The enzyme catalyses N(6)-dimethylallyladenosine(37) in tRNA + (sulfur carrier)-SH + AH2 + 2 S-adenosyl-L-methionine = 2-methylsulfanyl-N(6)-dimethylallyladenosine(37) in tRNA + (sulfur carrier)-H + 5'-deoxyadenosine + L-methionine + A + S-adenosyl-L-homocysteine + 2 H(+). Catalyzes the methylthiolation of N6-(dimethylallyl)adenosine (i(6)A), leading to the formation of 2-methylthio-N6-(dimethylallyl)adenosine (ms(2)i(6)A) at position 37 in tRNAs that read codons beginning with uridine. This chain is tRNA-2-methylthio-N(6)-dimethylallyladenosine synthase, found in Anaplasma marginale (strain St. Maries).